Here is a 536-residue protein sequence, read N- to C-terminus: Phosphoenolpyruvate carboxykinase (ATP) (536 aa).

Residues Arg-61, Tyr-195, and Lys-201 each contribute to the substrate site. ATP is bound by residues Lys-201, His-220, and 236–244 (GLSGTGKTT). Lys-201 and His-220 together coordinate Mn(2+). Position 257 (Asp-257) interacts with Mn(2+). The ATP site is built by Glu-285, Arg-322, and Thr-447. Residue Arg-322 coordinates substrate.

This sequence belongs to the phosphoenolpyruvate carboxykinase (ATP) family. Mn(2+) is required as a cofactor.

It localises to the cytoplasm. The enzyme catalyses oxaloacetate + ATP = phosphoenolpyruvate + ADP + CO2. The protein operates within carbohydrate biosynthesis; gluconeogenesis. In terms of biological role, involved in the gluconeogenesis. Catalyzes the conversion of oxaloacetate (OAA) to phosphoenolpyruvate (PEP) through direct phosphoryl transfer between the nucleoside triphosphate and OAA. In Brucella melitensis biotype 1 (strain ATCC 23456 / CCUG 17765 / NCTC 10094 / 16M), this protein is Phosphoenolpyruvate carboxykinase (ATP).